Here is an 81-residue protein sequence, read N- to C-terminus: A-kinase anchor protein 7 isoform alpha (81 aa).

Residue Gly2 is the site of N-myristoyl glycine attachment. A required for membrane localization region spans residues 2–11; that stretch reads GQLCCFPFAR. Residues Cys5 and Cys6 are each lipidated (S-palmitoyl cysteine). Residues 29-42 form an RII-binding region; that stretch reads LVRLSKRLVENAVL. The disordered stretch occupies residues 49 to 81; the sequence is LEETQNKKQPGEGNSTKAEEGDRNGDGSDNNRK. The segment covering 65–81 has biased composition (basic and acidic residues); sequence KAEEGDRNGDGSDNNRK.

Binds cAMP-dependent protein kinase (PKA). Interacts with PRKCA; only the cytoplasmic form is capable of interacting with PRKCA.

The protein localises to the lateral cell membrane. Functionally, targets the cAMP-dependent protein kinase (PKA) to the plasma membrane, and permits functional coupling to the L-type calcium channel. The membrane-associated form reduces epithelial sodium channel (ENaC) activity, whereas the free cytoplasmic form may negatively regulate ENaC channel feedback inhibition by intracellular sodium. In Mus musculus (Mouse), this protein is A-kinase anchor protein 7 isoform alpha (Akap7).